The primary structure comprises 499 residues: Probable cytosol aminopeptidase (499 aa).

Mn(2+) contacts are provided by Lys-271 and Asp-276. Lys-283 is an active-site residue. Mn(2+)-binding residues include Asp-294, Asp-353, and Glu-355. Arg-357 is an active-site residue.

Belongs to the peptidase M17 family. Requires Mn(2+) as cofactor.

It localises to the cytoplasm. The enzyme catalyses Release of an N-terminal amino acid, Xaa-|-Yaa-, in which Xaa is preferably Leu, but may be other amino acids including Pro although not Arg or Lys, and Yaa may be Pro. Amino acid amides and methyl esters are also readily hydrolyzed, but rates on arylamides are exceedingly low.. It catalyses the reaction Release of an N-terminal amino acid, preferentially leucine, but not glutamic or aspartic acids.. Its function is as follows. Presumably involved in the processing and regular turnover of intracellular proteins. Catalyzes the removal of unsubstituted N-terminal amino acids from various peptides. This Bordetella bronchiseptica (strain ATCC BAA-588 / NCTC 13252 / RB50) (Alcaligenes bronchisepticus) protein is Probable cytosol aminopeptidase.